The sequence spans 515 residues: Protein disulfide-isomerase (515 aa).

The signal sequence occupies residues 1-20; it reads MRSFAPWLVSLLGASAVVAA. Thioredoxin domains are found at residues 21–132 and 339–470; these read ADTE…QSLP and VLDG…ENGK. Catalysis depends on nucleophile residues cysteine 54, cysteine 57, cysteine 389, and cysteine 392. Cystine bridges form between cysteine 54–cysteine 57 and cysteine 389–cysteine 392. The segment at 478 to 515 is disordered; the sequence is VASEETQEGGDVTEAAPSATEAETPAATDDEKAEHDEL. Residues 490-504 show a composition bias toward low complexity; it reads TEAAPSATEAETPAA. Residues 506–515 are compositionally biased toward basic and acidic residues; it reads DDEKAEHDEL. A Prevents secretion from ER motif is present at residues 512 to 515; sequence HDEL.

It belongs to the protein disulfide isomerase family.

Its subcellular location is the endoplasmic reticulum lumen. The catalysed reaction is Catalyzes the rearrangement of -S-S- bonds in proteins.. Functionally, participates in the folding of proteins containing disulfide bonds, may be involved in glycosylation, prolyl hydroxylation and triglyceride transfer. This is Protein disulfide-isomerase (pdiA) from Aspergillus niger.